Here is a 309-residue protein sequence, read N- to C-terminus: Probable lipid kinase YegS-like (309 aa).

The 134-residue stretch at 1 to 134 (MAPSHWRLIL…IDLLRIDADH (134 aa)) folds into the DAGKc domain. Residues Thr39, 65-71 (GDGTLSE), and Thr96 contribute to the ATP site. Residues Leu219, Asp222, and Leu224 each contribute to the Mg(2+) site. Catalysis depends on Glu280, which acts as the Proton acceptor.

It belongs to the diacylglycerol/lipid kinase family. YegS lipid kinase subfamily. Mg(2+) serves as cofactor. It depends on Ca(2+) as a cofactor.

The protein resides in the cytoplasm. Probably phosphorylates lipids; the in vivo substrate is unknown. The polypeptide is Probable lipid kinase YegS-like (Xanthomonas campestris pv. campestris (strain 8004)).